The primary structure comprises 1191 residues: uncharacterized protein (1191 aa).

11 WD repeats span residues 558-588 (GHRDGVTSVAISSHKNLIASASRDGTVHLWT), 599-629 (GHTGSIYRVDFSPNGKIFATAGQDQTVKIWD), 640-670 (GHQDSVYSVSFSPDGEILASTSRDRTVRLWH), 682-712 (GHTKSVDDAQFSPDGQTLVSVCRDGQIRLWD), 723-753 (LPEVAFFGVNWHPNGNLLAVAADDGTVRLWT), 764-794 (GHDEFVTRVVFTPDGKQLFSSSSNGSVIHWS), 805-835 (GYPEAIFGLALASNGALLAIGAENNLVKVWD), 995-1025 (QRKEPIRSVSLHPTLPQLAAGDEQGNLTLWN), 1036-1066 (AHGDRLNQLQYSPNGKYLLSAGREGTAKIWS), 1077-1107 (SDPLPIDQIAISPDSQWIATAASDGMVRLWD), and 1118-1148 (STSGSLLGLDFNRQGQWLLAVAQNGDLQSWP).

This is an uncharacterized protein from Synechocystis sp. (strain ATCC 27184 / PCC 6803 / Kazusa).